The chain runs to 507 residues: MATLRADEISNIIRERIEQYTTEVKIVNTGTVLQVGDGIARIHGLDEVMAGELVEFEEGTIGIALNLESNNVGVVLMGDGLMIQEGSSVKATGRIAQIPVSEAYLGRVINALAKPIDGRGEIPASESRLIESPAPGIISRRSVYEPMQTGLIAIDSMIPIGRGQRELIIGDRQTGKTAVATDTILNQKGQNVICVYVAIGQKASSVAQVVTTFQEQGAMEYTIVVAETADAPATLQYLAPYTGAALAEYFMYRERHTSIIYDDPSKQAQAYRQMSLLLRRPPGREAYPGDVFYLHSRLLERAAKSSSRLGEGSMTALPIVETQAGDVSAYIPTNVISITDGQIFLSADLFNSGIRPAINVGISVSRVGSAAQIKAMKQVAGKLKLELAQFAELEAFAQFASDLDKATQNQLARGQRLRELLKQSQAAPLTVGEQILTIYTGTNGYLDSLEIGQVKKFLVELRTYLKTNKPQFQEIISSTKTLTEEAEVLLKEAIQEQTERFILQEQT.

Residue 170 to 177 (GDRQTGKT) coordinates ATP.

The protein belongs to the ATPase alpha/beta chains family. As to quaternary structure, F-type ATPases have 2 components, CF(1) - the catalytic core - and CF(0) - the membrane proton channel. CF(1) has five subunits: alpha(3), beta(3), gamma(1), delta(1), epsilon(1). CF(0) has four main subunits: a, b, b' and c.

It is found in the plastid. The protein resides in the chloroplast thylakoid membrane. It catalyses the reaction ATP + H2O + 4 H(+)(in) = ADP + phosphate + 5 H(+)(out). Functionally, produces ATP from ADP in the presence of a proton gradient across the membrane. The alpha chain is a regulatory subunit. The sequence is that of ATP synthase subunit alpha, chloroplastic from Nandina domestica (Heavenly bamboo).